Consider the following 390-residue polypeptide: LL-diaminopimelate aminotransferase 2 (390 aa).

The substrate site is built by Y13 and G38. Pyridoxal 5'-phosphate-binding positions include Y67, 102-103 (SK), Y127, N177, Y208, and 236-238 (SLS). Residues K103, Y127, and N177 each coordinate substrate. K239 bears the N6-(pyridoxal phosphate)lysine mark. R247 is a pyridoxal 5'-phosphate binding site. Substrate is bound at residue R365.

This sequence belongs to the class-I pyridoxal-phosphate-dependent aminotransferase family. LL-diaminopimelate aminotransferase subfamily. Homodimer. Pyridoxal 5'-phosphate serves as cofactor.

It catalyses the reaction (2S,6S)-2,6-diaminopimelate + 2-oxoglutarate = (S)-2,3,4,5-tetrahydrodipicolinate + L-glutamate + H2O + H(+). It participates in amino-acid biosynthesis; L-lysine biosynthesis via DAP pathway; LL-2,6-diaminopimelate from (S)-tetrahydrodipicolinate (aminotransferase route): step 1/1. Its function is as follows. Involved in the synthesis of meso-diaminopimelate (m-DAP or DL-DAP), required for both lysine and peptidoglycan biosynthesis. Catalyzes the direct conversion of tetrahydrodipicolinate to LL-diaminopimelate. The polypeptide is LL-diaminopimelate aminotransferase 2 (Trichormus variabilis (strain ATCC 29413 / PCC 7937) (Anabaena variabilis)).